Here is a 128-residue protein sequence, read N- to C-terminus: Large ribosomal subunit protein bL17 (128 aa).

This sequence belongs to the bacterial ribosomal protein bL17 family. In terms of assembly, part of the 50S ribosomal subunit. Contacts protein L32.

In Pseudomonas fluorescens (strain ATCC BAA-477 / NRRL B-23932 / Pf-5), this protein is Large ribosomal subunit protein bL17.